Consider the following 37-residue polypeptide: EPCIPKWKSCVNRHGDCCAGLECWKRRKSFEVCVPKV.

Intrachain disulfides connect Cys-3–Cys-18, Cys-10–Cys-23, and Cys-17–Cys-33.

The protein belongs to the psalmotoxin-1 family. As to expression, expressed by the venom gland.

It is found in the secreted. Its function is as follows. This toxin acts on different isoforms of acid-sensing ion channel ASIC1 in a similar manner to psalmotoxin-1 (AC P60514). On ASIC1a homotrimer, it provokes a pH-dependent inhibition (IC(50)=39.7 nM on human and IC(50)=1.3 nM on rat channels), whereas it potentiates ASIC1b homotrimer and ASIC1a-ASIC1b heterotrimer (EC(50)=178.1 nM on human ASIC1b, EC(50)=46.5 nM on rat ASIC1b and EC(50)=17.4 nM on rat ASIC1a-ASIC1b channels). On rat ASIC1a, it acts by inhibiting channel currents by shifting the pH of half-maximal effect (pH(50)) of steady-state desensitization and activation to more alkaline values. In Heteroscodra maculata (Togo starburst tarantula), this protein is Pi-theraphotoxin-Hm3a.